Consider the following 1109-residue polypeptide: Hybrid signal transduction histidine kinase F (1109 aa).

Positions 237 to 289 (LSTETTITKKNGEKYPAEVFVKEISDIHSNSIGIMIIVRDITDQIRLKEMNIE) constitute a PAC domain. One can recognise a Histidine kinase domain in the interval 324–547 (TISHEIRTPL…LFSVTLNFEQ (224 aa)). Position 327 is a phosphohistidine; by autocatalysis (His327). A coiled-coil region spans residues 719–760 (SNLIQTISQIDNQQQQQQQQLQQQEQEQQHQQQQLQQEQQFV). The span at 739–758 (LQQQEQEQQHQQQQLQQEQQ) shows a compositional bias: low complexity. Residues 739–819 (LQQQEQEQQH…TSSDSGESDE (81 aa)) are disordered. Residues 767-782 (DSSEKKTTPKKDRGKY) are compositionally biased toward basic and acidic residues. The 121-residue stretch at 928 to 1048 (RILLVDDNAV…PLGELVKKYL (121 aa)) folds into the Response regulatory domain. Asp977 bears the 4-aspartylphosphate mark. Positions 1052–1099 (NNNNNNNNNNNNNNNNNSNNNNSNSNSNPNSNSNSNSNSNSNPNQNPN) are enriched in low complexity. A disordered region spans residues 1052 to 1109 (NNNNNNNNNNNNNNNNNSNNNNSNSNSNPNSNSNSNSNSNSNPNQNPNYCNNLPTDFI). Residues 1100–1109 (YCNNLPTDFI) show a composition bias toward polar residues.

The catalysed reaction is ATP + protein L-histidine = ADP + protein N-phospho-L-histidine.. Functionally, acts as a receptor histidine kinase for a signal transduction pathway. This protein undergoes an ATP-dependent autophosphorylation at a conserved histidine residue in the kinase core, and a phosphoryl group is then transferred to a conserved aspartate residue in the receiver domain. This Dictyostelium discoideum (Social amoeba) protein is Hybrid signal transduction histidine kinase F (dhkF).